The following is a 248-amino-acid chain: Ethylene-responsive transcription factor ERF026 (248 aa).

Residues 89-145 (VYRGIRCRSGKWVSEIREPKKTTRVWLGTYPTPEMAAAAYDVAALALKGGDTLLNFP) constitute a DNA-binding region (AP2/ERF). Residues 225-248 (PPWMGSPPSDDSPENSDGESLWSY) form a disordered region.

The protein belongs to the AP2/ERF transcription factor family. ERF subfamily.

It localises to the nucleus. Its function is as follows. Probably acts as a transcriptional activator. Binds to the GCC-box pathogenesis-related promoter element. May be involved in the regulation of gene expression by stress factors and by components of stress signal transduction pathways. The polypeptide is Ethylene-responsive transcription factor ERF026 (ERF026) (Arabidopsis thaliana (Mouse-ear cress)).